The sequence spans 331 residues: Cytosolic Fe-S cluster assembly factor NBP35 (331 aa).

A compositionally biased stretch (polar residues) spans 1–10 (MSPSQTQIEK). Positions 1-32 (MSPSQTQIEKSQLAAPEPEHCPGPESELAGQG) are disordered. Residues Cys21, Cys35, Cys38, and Cys44 each coordinate [4Fe-4S] cluster. 75-82 (GKGGVGKS) is a binding site for ATP. Positions 249 and 252 each coordinate [4Fe-4S] cluster.

This sequence belongs to the Mrp/NBP35 ATP-binding proteins family. NUBP1/NBP35 subfamily. In terms of assembly, heterotetramer of 2 NBP35 and 2 CFD1 chains. Requires [4Fe-4S] cluster as cofactor.

Its subcellular location is the cytoplasm. The protein localises to the nucleus. Functionally, component of the cytosolic iron-sulfur (Fe/S) protein assembly (CIA) machinery. Required for maturation of extramitochondrial Fe-S proteins. The NBP35-CFD1 heterotetramer forms a Fe-S scaffold complex, mediating the de novo assembly of an Fe-S cluster and its transfer to target apoproteins. Required for biogenesis and export of both ribosomal subunits, which may reflect a role in assembly of the Fe/S clusters in RLI1, a protein which performs rRNA processing and ribosome export. The sequence is that of Cytosolic Fe-S cluster assembly factor NBP35 from Candida albicans (strain SC5314 / ATCC MYA-2876) (Yeast).